We begin with the raw amino-acid sequence, 362 residues long: Histidinol-phosphate aminotransferase (362 aa).

Lys218 is subject to N6-(pyridoxal phosphate)lysine.

It belongs to the class-II pyridoxal-phosphate-dependent aminotransferase family. Histidinol-phosphate aminotransferase subfamily. In terms of assembly, homodimer. Pyridoxal 5'-phosphate serves as cofactor.

It catalyses the reaction L-histidinol phosphate + 2-oxoglutarate = 3-(imidazol-4-yl)-2-oxopropyl phosphate + L-glutamate. It functions in the pathway amino-acid biosynthesis; L-histidine biosynthesis; L-histidine from 5-phospho-alpha-D-ribose 1-diphosphate: step 7/9. In Xanthomonas campestris pv. campestris (strain 8004), this protein is Histidinol-phosphate aminotransferase.